The following is a 100-amino-acid chain: NADH-quinone oxidoreductase subunit K 2 (100 aa).

3 helical membrane passes run 4–24 (LNNY…GVLV), 29–49 (IVIF…FIAF), and 60–80 (IFVF…LALM).

The protein belongs to the complex I subunit 4L family. In terms of assembly, NDH-1 is composed of 14 different subunits. Subunits NuoA, H, J, K, L, M, N constitute the membrane sector of the complex.

It is found in the cell inner membrane. The enzyme catalyses a quinone + NADH + 5 H(+)(in) = a quinol + NAD(+) + 4 H(+)(out). Functionally, NDH-1 shuttles electrons from NADH, via FMN and iron-sulfur (Fe-S) centers, to quinones in the respiratory chain. The immediate electron acceptor for the enzyme in this species is believed to be ubiquinone. Couples the redox reaction to proton translocation (for every two electrons transferred, four hydrogen ions are translocated across the cytoplasmic membrane), and thus conserves the redox energy in a proton gradient. The polypeptide is NADH-quinone oxidoreductase subunit K 2 (Geotalea uraniireducens (strain Rf4) (Geobacter uraniireducens)).